A 350-amino-acid chain; its full sequence is 2-oxoglutarate and iron-dependent oxygenase domain-containing protein 2 (350 aa).

The Fe2OG dioxygenase domain occupies D215–A309. 3 residues coordinate Fe cation: H235, D237, and H290. R300 provides a ligand contact to 2-oxoglutarate.

The protein belongs to the OGFOD2 family. The cofactor is Fe(2+). Requires L-ascorbate as cofactor.

This is 2-oxoglutarate and iron-dependent oxygenase domain-containing protein 2 (OGFOD2) from Homo sapiens (Human).